Reading from the N-terminus, the 381-residue chain is MTKKILFCATVDYHFKAFHLPYFKWFKQMGWEVHVAANGQTKLPYVDEKFSIPIRRSPFDPQNLAVYRQLKKVIDTYEYDIVHCHTPVGGVLARLAARQARRHGTKVLYTAHGFHFCKGAPMKNWLLYYPVEKWLSAYTDCLITINEEDYIRAKGLQRPGGRTQKIHGIGVNTERFRPVSPIEQQRLREKHGFREDDFILVYPAELNLNKNQKQLIEAAALLKEKIPSLRLVFAGEGAMEHTYQTLAEKLGASAHVCFYGFCSDIHELIQLADVSVASSIREGLGMNVLEGMAAEQPAIATDNRGHREIIRDGENGFLIKIGDSAAFARRIEQLYHKPELCRKLGQEGRKTALRFSEARTVEEMADIYSAYMDMDTKEKSV.

It belongs to the glycosyltransferase group 1 family. Glycosyltransferase 4 subfamily.

Functionally, may be involved in the production of the exopolysaccharide (EPS) component of the extracellular matrix during biofilm formation. EPS is responsible for the adhesion of chains of cells into bundles. Required for biofilm maintenance. The polypeptide is Putative glycosyltransferase EpsD (epsD) (Bacillus subtilis (strain 168)).